A 461-amino-acid polypeptide reads, in one-letter code: V-type ATP synthase beta chain (461 aa).

It belongs to the ATPase alpha/beta chains family.

In terms of biological role, produces ATP from ADP in the presence of a proton gradient across the membrane. The V-type beta chain is a regulatory subunit. In Streptococcus pneumoniae (strain CGSP14), this protein is V-type ATP synthase beta chain.